The following is a 608-amino-acid chain: Glutamine--fructose-6-phosphate aminotransferase [isomerizing] (608 aa).

Cysteine 2 serves as the catalytic Nucleophile; for GATase activity. The 216-residue stretch at 2 to 217 folds into the Glutamine amidotransferase type-2 domain; sequence CGIVGILGRE…DGDWVVLTRN (216 aa). 2 consecutive SIS domains span residues 284-423 and 456-598; these read LPFD…ARGE and LARE…VDQP. The active-site For Fru-6P isomerization activity is lysine 603.

In terms of assembly, homodimer.

Its subcellular location is the cytoplasm. It catalyses the reaction D-fructose 6-phosphate + L-glutamine = D-glucosamine 6-phosphate + L-glutamate. In terms of biological role, catalyzes the first step in hexosamine metabolism, converting fructose-6P into glucosamine-6P using glutamine as a nitrogen source. The protein is Glutamine--fructose-6-phosphate aminotransferase [isomerizing] (glmS) of Bradyrhizobium diazoefficiens (strain JCM 10833 / BCRC 13528 / IAM 13628 / NBRC 14792 / USDA 110).